We begin with the raw amino-acid sequence, 292 residues long: Probable endonuclease 4 (292 aa).

Positions 69, 109, 145, 179, 182, 216, 229, 231, and 261 each coordinate Zn(2+).

It belongs to the AP endonuclease 2 family. Zn(2+) serves as cofactor.

The catalysed reaction is Endonucleolytic cleavage to 5'-phosphooligonucleotide end-products.. Its function is as follows. Endonuclease IV plays a role in DNA repair. It cleaves phosphodiester bonds at apurinic or apyrimidinic (AP) sites, generating a 3'-hydroxyl group and a 5'-terminal sugar phosphate. This chain is Probable endonuclease 4, found in Desulfotalea psychrophila (strain LSv54 / DSM 12343).